Here is a 320-residue protein sequence, read N- to C-terminus: o-succinylbenzoate synthase (320 aa).

Lys-133 serves as the catalytic Proton donor. Residues Asp-161, Glu-190, and Asp-213 each contribute to the Mg(2+) site. Lys-235 serves as the catalytic Proton acceptor.

Belongs to the mandelate racemase/muconate lactonizing enzyme family. MenC type 1 subfamily. Requires a divalent metal cation as cofactor.

The catalysed reaction is (1R,6R)-6-hydroxy-2-succinyl-cyclohexa-2,4-diene-1-carboxylate = 2-succinylbenzoate + H2O. It functions in the pathway quinol/quinone metabolism; 1,4-dihydroxy-2-naphthoate biosynthesis; 1,4-dihydroxy-2-naphthoate from chorismate: step 4/7. The protein operates within quinol/quinone metabolism; menaquinone biosynthesis. In terms of biological role, converts 2-succinyl-6-hydroxy-2,4-cyclohexadiene-1-carboxylate (SHCHC) to 2-succinylbenzoate (OSB). The chain is o-succinylbenzoate synthase from Salmonella paratyphi C (strain RKS4594).